Reading from the N-terminus, the 955-residue chain is Disintegrin and metalloproteinase domain-containing protein 19 (955 aa).

The N-terminal stretch at 1 to 25 (MPGGAGAARLCLLAFALQPLRPRAA) is a signal peptide. Residues 26–202 (REPGWTRGSE…QTKKRPRRMK (177 aa)) constitute a propeptide that is removed on maturation. Positions 130–137 (STCRGIRG) match the Cysteine switch motif. Zn(2+) is bound at residue Cys132. An N-linked (GlcNAc...) asparagine glycan is attached at Asn144. The Extracellular portion of the chain corresponds to 203-699 (REDLNSMKYV…IDSGPMPPES (497 aa)). Residues 210–408 (KYVELYLVAD…GGGMCLSNMP (199 aa)) enclose the Peptidase M12B domain. 3 cysteine pairs are disulfide-bonded: Cys320–Cys403, Cys360–Cys387, and Cys361–Cys370. His345 is a binding site for Zn(2+). Residue Glu346 is part of the active site. Zn(2+) is bound by residues His349 and His355. A Disintegrin domain is found at 416-502 (GRRCGNGYLE…HCPTNFYQMD (87 aa)). 2 N-linked (GlcNAc...) asparagine glycosylation sites follow: Asn444 and Asn447. Cys474 and Cys494 are disulfide-bonded. Asn645 carries N-linked (GlcNAc...) asparagine glycosylation. Positions 650–682 (ETEGCGKKCNGHGVCNNNQNCHCLPGWAPPFCN) constitute an EGF-like domain. Intrachain disulfides connect Cys654/Cys664, Cys658/Cys670, and Cys672/Cys681. A helical transmembrane segment spans residues 700–720 (VGPVVAGVLVAILVLAVLMLM). Residues 721 to 955 (YYCCRQNNKL…AKHSCFLVPA (235 aa)) lie on the Cytoplasmic side of the membrane. Residues 753–771 (SQNSGTGHANPTFKLQTPQ) are compositionally biased toward polar residues. A disordered region spans residues 753–917 (SQNSGTGHAN…LKVKAGTRGL (165 aa)). Composition is skewed to pro residues over residues 787-796 (SQPPPRPPPD) and 833-844 (RPPPSRPIPPAP). The short motif at 833–844 (RPPPSRPIPPAP) is the SH3-binding element.

In terms of assembly, interacts with SH3PXD2A. Requires Zn(2+) as cofactor. Post-translationally, the precursor is cleaved by a furin endopeptidase. In terms of tissue distribution, expressed in many normal organ tissues and several cancer cell lines.

The protein localises to the membrane. Participates in the proteolytic processing of beta-type neuregulin isoforms which are involved in neurogenesis and synaptogenesis, suggesting a regulatory role in glial cell. Also cleaves alpha-2 macroglobulin. May be involved in osteoblast differentiation and/or osteoblast activity in bone. This Homo sapiens (Human) protein is Disintegrin and metalloproteinase domain-containing protein 19 (ADAM19).